We begin with the raw amino-acid sequence, 427 residues long: 3-phosphoshikimate 1-carboxyvinyltransferase (427 aa).

3-phosphoshikimate is bound by residues Lys-20, Ser-21, and Arg-25. Lys-20 provides a ligand contact to phosphoenolpyruvate. Residues Gly-92 and Arg-120 each coordinate phosphoenolpyruvate. Ser-166, Gln-168, Asp-312, and Lys-339 together coordinate 3-phosphoshikimate. Gln-168 contributes to the phosphoenolpyruvate binding site. The active-site Proton acceptor is Asp-312. Phosphoenolpyruvate-binding residues include Arg-343 and Arg-385.

The protein belongs to the EPSP synthase family. As to quaternary structure, monomer.

Its subcellular location is the cytoplasm. The enzyme catalyses 3-phosphoshikimate + phosphoenolpyruvate = 5-O-(1-carboxyvinyl)-3-phosphoshikimate + phosphate. The protein operates within metabolic intermediate biosynthesis; chorismate biosynthesis; chorismate from D-erythrose 4-phosphate and phosphoenolpyruvate: step 6/7. Catalyzes the transfer of the enolpyruvyl moiety of phosphoenolpyruvate (PEP) to the 5-hydroxyl of shikimate-3-phosphate (S3P) to produce enolpyruvyl shikimate-3-phosphate and inorganic phosphate. The protein is 3-phosphoshikimate 1-carboxyvinyltransferase of Streptococcus agalactiae serotype Ia (strain ATCC 27591 / A909 / CDC SS700).